The sequence spans 633 residues: Glutamyl-tRNA(Gln) amidotransferase subunit E (633 aa).

It belongs to the GatB/GatE family. GatE subfamily. In terms of assembly, heterodimer of GatD and GatE.

It carries out the reaction L-glutamyl-tRNA(Gln) + L-glutamine + ATP + H2O = L-glutaminyl-tRNA(Gln) + L-glutamate + ADP + phosphate + H(+). Allows the formation of correctly charged Gln-tRNA(Gln) through the transamidation of misacylated Glu-tRNA(Gln) in organisms which lack glutaminyl-tRNA synthetase. The reaction takes place in the presence of glutamine and ATP through an activated gamma-phospho-Glu-tRNA(Gln). The GatDE system is specific for glutamate and does not act on aspartate. This chain is Glutamyl-tRNA(Gln) amidotransferase subunit E, found in Methanosarcina barkeri (strain Fusaro / DSM 804).